Here is a 126-residue protein sequence, read N- to C-terminus: MARLSGVDLPREKRVEIALTYIFGIGRSRSRDTLAATAVNPDTRVRDLSEEEIVRLRDWIDANYRVEGDLNREIKQDIRRKMEIGCYQGLRHRRNLPVHGQRTHTNARTRKGPRRAIAGKKKAGKK.

Positions 95–126 (NLPVHGQRTHTNARTRKGPRRAIAGKKKAGKK) are disordered.

Belongs to the universal ribosomal protein uS13 family. Part of the 30S ribosomal subunit. Forms a loose heterodimer with protein S19. Forms two bridges to the 50S subunit in the 70S ribosome.

Functionally, located at the top of the head of the 30S subunit, it contacts several helices of the 16S rRNA. In the 70S ribosome it contacts the 23S rRNA (bridge B1a) and protein L5 of the 50S subunit (bridge B1b), connecting the 2 subunits; these bridges are implicated in subunit movement. Contacts the tRNAs in the A and P-sites. The polypeptide is Small ribosomal subunit protein uS13 (Frankia casuarinae (strain DSM 45818 / CECT 9043 / HFP020203 / CcI3)).